The primary structure comprises 182 residues: UPF0397 protein SPP_0507 (182 aa).

5 helical membrane-spanning segments follow: residues 10-30, 46-66, 73-93, 109-129, and 148-168; these read VVAVGIGAALFVVIGMINIPT, LLSIIFGPIIGLLVGLIGHAI, YGLWWTWIIASGLFGLVVGLF, ILIFNLIQLLANALVWGVLAP, and IVAGIANGVSVAIAGTLLLLA.

The protein belongs to the UPF0397 family.

It is found in the cell membrane. The protein is UPF0397 protein SPP_0507 of Streptococcus pneumoniae (strain P1031).